A 275-amino-acid polypeptide reads, in one-letter code: NAD kinase (275 aa).

The active-site Proton acceptor is the aspartate 53. NAD(+) is bound by residues 53–54 (DG), 129–130 (NE), arginine 155, aspartate 157, and 168–173 (TAYNKS).

It belongs to the NAD kinase family. The cofactor is a divalent metal cation.

The protein localises to the cytoplasm. The enzyme catalyses NAD(+) + ATP = ADP + NADP(+) + H(+). Involved in the regulation of the intracellular balance of NAD and NADP, and is a key enzyme in the biosynthesis of NADP. Catalyzes specifically the phosphorylation on 2'-hydroxyl of the adenosine moiety of NAD to yield NADP. This is NAD kinase from Streptococcus agalactiae serotype Ia (strain ATCC 27591 / A909 / CDC SS700).